A 58-amino-acid polypeptide reads, in one-letter code: Potassium channel toxin Ts16 (58 aa).

Positions 1 to 16 (MHSSVFILILFSLAVI) are cleaved as a signal peptide. Cystine bridges form between Cys29/Cys51, Cys34/Cys47, and Cys38/Cys53.

As to expression, expressed by the venom gland.

It localises to the secreted. Blocks potassium channels. The polypeptide is Potassium channel toxin Ts16 (Tityus serrulatus (Brazilian scorpion)).